A 501-amino-acid polypeptide reads, in one-letter code: ATP synthase subunit alpha (501 aa).

169–176 (GDRQTGKT) lines the ATP pocket.

Belongs to the ATPase alpha/beta chains family. In terms of assembly, F-type ATPases have 2 components, CF(1) - the catalytic core - and CF(0) - the membrane proton channel. CF(1) has five subunits: alpha(3), beta(3), gamma(1), delta(1), epsilon(1). CF(0) has three main subunits: a(1), b(2) and c(9-12). The alpha and beta chains form an alternating ring which encloses part of the gamma chain. CF(1) is attached to CF(0) by a central stalk formed by the gamma and epsilon chains, while a peripheral stalk is formed by the delta and b chains.

Its subcellular location is the cell membrane. The catalysed reaction is ATP + H2O + 4 H(+)(in) = ADP + phosphate + 5 H(+)(out). Produces ATP from ADP in the presence of a proton gradient across the membrane. The alpha chain is a regulatory subunit. In Streptococcus gordonii (strain Challis / ATCC 35105 / BCRC 15272 / CH1 / DL1 / V288), this protein is ATP synthase subunit alpha.